Consider the following 251-residue polypeptide: Adenosine 5'-phosphosulfate reductase (251 aa).

Residues C121, C122, C204, and C207 each coordinate [4Fe-4S] cluster. C232 acts as the Nucleophile; cysteine thiosulfonate intermediate in catalysis.

This sequence belongs to the PAPS reductase family. CysH subfamily. The cofactor is [4Fe-4S] cluster.

The protein localises to the cytoplasm. It carries out the reaction [thioredoxin]-disulfide + sulfite + AMP + 2 H(+) = adenosine 5'-phosphosulfate + [thioredoxin]-dithiol. The protein operates within sulfur metabolism; hydrogen sulfide biosynthesis; sulfite from sulfate. Functionally, catalyzes the formation of sulfite from adenosine 5'-phosphosulfate (APS) using thioredoxin as an electron donor. The polypeptide is Adenosine 5'-phosphosulfate reductase (Sinorhizobium fredii (strain USDA 257)).